Consider the following 189-residue polypeptide: Casparian strip membrane protein 2 (189 aa).

A disordered region spans residues 1-21; sequence MKVSTIESGEISKGASSPRKG. Over 1–25 the chain is Cytoplasmic; the sequence is MKVSTIESGEISKGASSPRKGMKRG. Residues 26–46 form a helical membrane-spanning segment; that stretch reads LSIMDFILRIFAAMSTLGSAL. The Extracellular segment spans residues 47–73; sequence SMGTAKQTMPFATRFVRFKVSFHDLPT. The helical transmembrane segment at 74–94 threads the bilayer; the sequence is FLFFVTANSIVCGYLALSLVL. Topologically, residues 95 to 108 are cytoplasmic; sequence SFFHIVRTISVKSR. The helical transmembrane segment at 109 to 129 threads the bilayer; sequence ILLVFLDTVMFGLLTSGASAA. Over 130–163 the chain is Extracellular; sequence AAIVYVAHYGNPSANWFPFCQQYNSFCGRISGSL. Residues 164–184 traverse the membrane as a helical segment; it reads VGSFIAVVIFMILILMSGISI. Residues 185-189 are Cytoplasmic-facing; sequence SKSKH.

Belongs to the Casparian strip membrane proteins (CASP) family. As to quaternary structure, homodimer and heterodimers.

Its subcellular location is the cell membrane. In terms of biological role, regulates membrane-cell wall junctions and localized cell wall deposition. Required for establishment of the Casparian strip membrane domain (CSD) and the subsequent formation of Casparian strips, a cell wall modification of the root endodermis that determines an apoplastic barrier between the intraorganismal apoplasm and the extraorganismal apoplasm and prevents lateral diffusion. In Medicago truncatula (Barrel medic), this protein is Casparian strip membrane protein 2.